Reading from the N-terminus, the 963-residue chain is Phosphoenolpyruvate carboxylase (963 aa).

Phosphoserine is present on S11. Catalysis depends on residues H172 and K600.

The protein belongs to the PEPCase type 1 family. Homotetramer. The cofactor is Mg(2+).

The protein resides in the cytoplasm. The enzyme catalyses oxaloacetate + phosphate = phosphoenolpyruvate + hydrogencarbonate. By light-reversible phosphorylation. Its function is as follows. Through the carboxylation of phosphoenolpyruvate (PEP) it forms oxaloacetate, a four-carbon dicarboxylic acid source for the tricarboxylic acid cycle. The sequence is that of Phosphoenolpyruvate carboxylase (PPC) from Picea abies (Norway spruce).